Consider the following 389-residue polypeptide: Chalcone synthase 1 (389 aa).

C164 is an active-site residue.

The protein belongs to the thiolase-like superfamily. Chalcone/stilbene synthases family.

The catalysed reaction is (E)-4-coumaroyl-CoA + 3 malonyl-CoA + 3 H(+) = 2',4,4',6'-tetrahydroxychalcone + 3 CO2 + 4 CoA. It functions in the pathway secondary metabolite biosynthesis; flavonoid biosynthesis. Functionally, the primary product of this enzyme is 4,2',4',6'-tetrahydroxychalcone (also termed naringenin-chalcone or chalcone) which can under specific conditions spontaneously isomerize into naringenin. This is Chalcone synthase 1 (CHS1) from Camellia sinensis (Tea plant).